We begin with the raw amino-acid sequence, 255 residues long: Enkurin (255 aa).

Positions 1-10 (MDSPCTSESI) are enriched in polar residues. 2 disordered regions span residues 1-25 (MDSP…PQHP) and 67-96 (SKEK…DHPV). Over residues 73–83 (PPKKKFNRCSP) the composition is skewed to basic residues. The short motif at 83-89 (PKKPAVP) is the SH3-binding element. Positions 160–252 (KRNEDVKKAQ…VIEKHKIIYI (93 aa)) constitute an Enkurin domain. The segment at 160-255 (KRNEDVKKAQ…KHKIIYIANK (96 aa)) is interaction with TRPC proteins. The IQ domain occupies 176–187 (IQENLKKAAMKR).

In terms of assembly, microtubule inner protein component of sperm flagellar doublet microtubules. Binds calmodulin via its IQ domain. Interacts with TRPC1, TRPC2, TRPC5, but not TRPC3. Interacts with CFAP45. In terms of tissue distribution, high expression in testis and vomeronasal organ and lower expression in ovary, heart, lung, and brain. Not expressed in other tissues.

Its subcellular location is the cytoplasm. It is found in the cytoskeleton. The protein resides in the cilium axoneme. It localises to the flagellum axoneme. In terms of biological role, adapter that functions to localize a calcium-sensitive signal transduction machinery in sperm to a calcium-permeable ion channel. Microtubule inner protein (MIP) part of the dynein-decorated doublet microtubules (DMTs) in cilia axoneme, which is required for motile cilia beating. The sequence is that of Enkurin (Enkur) from Mus musculus (Mouse).